The chain runs to 1486 residues: Chromosome partition protein MukB (1486 aa).

Position 34–41 (34–41 (GGNGAGKS)) interacts with ATP. Coiled-coil stretches lie at residues 326 to 418 (LEAD…QYNQ), 444 to 480 (LETF…QAYQ), and 509 to 603 (RHLA…RAPV). The segment at 666 to 783 (PGGSEDQRLN…EVPLFGRAAR (118 aa)) is flexible hinge. 3 coiled-coil regions span residues 835–923 (EAEI…AKLE), 977–1115 (EMLS…TAKA), and 1209–1266 (VEAI…QNVS).

This sequence belongs to the SMC family. MukB subfamily. In terms of assembly, homodimerization via its hinge domain. Binds to DNA via its C-terminal region. Interacts, and probably forms a ternary complex, with MukE and MukF via its C-terminal region. The complex formation is stimulated by calcium or magnesium. Interacts with tubulin-related protein FtsZ.

The protein localises to the cytoplasm. It is found in the nucleoid. Its function is as follows. Plays a central role in chromosome condensation, segregation and cell cycle progression. Functions as a homodimer, which is essential for chromosome partition. Involved in negative DNA supercoiling in vivo, and by this means organize and compact chromosomes. May achieve or facilitate chromosome segregation by condensation DNA from both sides of a centrally located replisome during cell division. This chain is Chromosome partition protein MukB, found in Escherichia coli O6:K15:H31 (strain 536 / UPEC).